The sequence spans 349 residues: D-alanine--D-alanine ligase (349 aa).

Residues 132-335 (KHVFEAVGVP…YSDLIEKLVD (204 aa)) form the ATP-grasp domain. 162-217 (VEKLDFPVFVKPANMGSSVGISKVDDLADLQPALSEAYKYDNRVVIEQGVDAREIE) contributes to the ATP binding site. D289, E302, and N304 together coordinate Mg(2+).

This sequence belongs to the D-alanine--D-alanine ligase family. Mg(2+) serves as cofactor. The cofactor is Mn(2+).

It is found in the cytoplasm. The enzyme catalyses 2 D-alanine + ATP = D-alanyl-D-alanine + ADP + phosphate + H(+). Its pathway is cell wall biogenesis; peptidoglycan biosynthesis. In terms of biological role, cell wall formation. The protein is D-alanine--D-alanine ligase of Lactococcus lactis subsp. cremoris (strain MG1363).